The primary structure comprises 447 residues: Alliin lyase (447 aa).

A propeptide spanning residues 1–2 is cleaved from the precursor; the sequence is QA. In terms of domain architecture, EGF-like; atypical spans 15 to 61; it reads EAVANINCSGHGRAFLDGILSDGSPKCECNTCYTGADCSQKITGCSA. Residue Asn21 is glycosylated (N-linked (GlcNAc...) asparagine). 3 cysteine pairs are disulfide-bonded: Cys22–Cys41, Cys43–Cys52, and Cys46–Cys59. 94 to 102 contributes to the chloride binding site; it reads YFFNPVSNF. N-linked (GlcNAc...) asparagine glycans are attached at residues Asn148 and Asn193. At Lys253 the chain carries N6-(pyridoxal phosphate)lysine. An N-linked (GlcNAc...) asparagine glycan is attached at Asn330. A disulfide bridge connects residues Cys370 and Cys378.

The protein belongs to the alliinase family. Homodimer. It depends on pyridoxal 5'-phosphate as a cofactor.

The protein resides in the vacuole. The catalysed reaction is an S-alkyl-L-cysteine S-oxide = an S-alkyl sulfenate + 2-aminoprop-2-enoate. The sequence is that of Alliin lyase from Allium cepa var. aggregatum (Shallot).